The primary structure comprises 223 residues: Probable cell wall protein PGA61 (223 aa).

An N-terminal signal peptide occupies residues 1-16 (MKSGLLLAVILPVAFA). Asn-25 is a glycosylation site (N-linked (GlcNAc...) asparagine). A disordered region spans residues 83–134 (GAPSSSSTPTSSTETTSSTEAETTEAETTEQPSSSTSSNTESSKTTILETPS). Low complexity-rich tracts occupy residues 84–103 (APSS…STEA) and 111–128 (TEQP…SKTT). Asn-188 is a glycosylation site (N-linked (GlcNAc...) asparagine). Residue Asn-202 is the site of GPI-anchor amidated asparagine attachment. A propeptide spans 203–223 (GAGRAAVIGSGSLLALLLNFI) (removed in mature form).

Belongs to the IHD1 family. In terms of processing, the GPI-anchor is attached to the protein in the endoplasmic reticulum and serves to target the protein to the cell surface. There, the glucosamine-inositol phospholipid moiety is cleaved off and the GPI-modified mannoprotein is covalently attached via its lipidless GPI glycan remnant to the 1,6-beta-glucan of the outer cell wall layer.

The protein resides in the secreted. Its subcellular location is the cell wall. It is found in the membrane. Probable GPI-anchored cell wall protein that may be involved in cell wall organization, hyphal growth, as well as in virulence. This Candida albicans (strain SC5314 / ATCC MYA-2876) (Yeast) protein is Probable cell wall protein PGA61 (PGA61).